Reading from the N-terminus, the 461-residue chain is L-seryl-tRNA(Sec) selenium transferase (461 aa).

An N6-(pyridoxal phosphate)lysine modification is found at K294.

Belongs to the SelA family. The cofactor is pyridoxal 5'-phosphate.

The protein localises to the cytoplasm. The catalysed reaction is L-seryl-tRNA(Sec) + selenophosphate + H(+) = L-selenocysteinyl-tRNA(Sec) + phosphate. The protein operates within aminoacyl-tRNA biosynthesis; selenocysteinyl-tRNA(Sec) biosynthesis; selenocysteinyl-tRNA(Sec) from L-seryl-tRNA(Sec) (bacterial route): step 1/1. Functionally, converts seryl-tRNA(Sec) to selenocysteinyl-tRNA(Sec) required for selenoprotein biosynthesis. In Haemophilus influenzae (strain ATCC 51907 / DSM 11121 / KW20 / Rd), this protein is L-seryl-tRNA(Sec) selenium transferase.